The chain runs to 583 residues: Membrane protein insertase YidC (583 aa).

6 helical membrane-spanning segments follow: residues 5–25 (SVTG…FMSP), 341–361 (PFAE…VSNY), 362–382 (GLII…LSMA), 427–447 (IGGC…FYVF), 473–493 (FGFA…LMAV), and 520–540 (AMML…YLMF).

The protein belongs to the OXA1/ALB3/YidC family. Type 1 subfamily. As to quaternary structure, interacts with the Sec translocase complex via SecD. Specifically interacts with transmembrane segments of nascent integral membrane proteins during membrane integration.

The protein localises to the cell inner membrane. Its function is as follows. Required for the insertion and/or proper folding and/or complex formation of integral membrane proteins into the membrane. Involved in integration of membrane proteins that insert both dependently and independently of the Sec translocase complex, as well as at least some lipoproteins. Aids folding of multispanning membrane proteins. This chain is Membrane protein insertase YidC, found in Pelodictyon phaeoclathratiforme (strain DSM 5477 / BU-1).